The following is a 316-amino-acid chain: 4-hydroxy-3-methylbut-2-enyl diphosphate reductase (316 aa).

Residue Cys12 coordinates [4Fe-4S] cluster. His41 and His74 together coordinate (2E)-4-hydroxy-3-methylbut-2-enyl diphosphate. Dimethylallyl diphosphate is bound by residues His41 and His74. Positions 41 and 74 each coordinate isopentenyl diphosphate. Residue Cys96 coordinates [4Fe-4S] cluster. His124 contacts (2E)-4-hydroxy-3-methylbut-2-enyl diphosphate. His124 serves as a coordination point for dimethylallyl diphosphate. An isopentenyl diphosphate-binding site is contributed by His124. The Proton donor role is filled by Glu126. Thr167 contributes to the (2E)-4-hydroxy-3-methylbut-2-enyl diphosphate binding site. Cys197 serves as a coordination point for [4Fe-4S] cluster. (2E)-4-hydroxy-3-methylbut-2-enyl diphosphate contacts are provided by Ser225, Ser226, Asn227, and Ser269. Dimethylallyl diphosphate-binding residues include Ser225, Ser226, Asn227, and Ser269. Ser225, Ser226, Asn227, and Ser269 together coordinate isopentenyl diphosphate.

It belongs to the IspH family. As to quaternary structure, homodimer. Requires [4Fe-4S] cluster as cofactor.

The enzyme catalyses isopentenyl diphosphate + 2 oxidized [2Fe-2S]-[ferredoxin] + H2O = (2E)-4-hydroxy-3-methylbut-2-enyl diphosphate + 2 reduced [2Fe-2S]-[ferredoxin] + 2 H(+). The catalysed reaction is dimethylallyl diphosphate + 2 oxidized [2Fe-2S]-[ferredoxin] + H2O = (2E)-4-hydroxy-3-methylbut-2-enyl diphosphate + 2 reduced [2Fe-2S]-[ferredoxin] + 2 H(+). Its pathway is isoprenoid biosynthesis; dimethylallyl diphosphate biosynthesis; dimethylallyl diphosphate from (2E)-4-hydroxy-3-methylbutenyl diphosphate: step 1/1. It functions in the pathway isoprenoid biosynthesis; isopentenyl diphosphate biosynthesis via DXP pathway; isopentenyl diphosphate from 1-deoxy-D-xylulose 5-phosphate: step 6/6. In terms of biological role, catalyzes the conversion of 1-hydroxy-2-methyl-2-(E)-butenyl 4-diphosphate (HMBPP) into a mixture of isopentenyl diphosphate (IPP) and dimethylallyl diphosphate (DMAPP). Acts in the terminal step of the DOXP/MEP pathway for isoprenoid precursor biosynthesis. In Salmonella paratyphi C (strain RKS4594), this protein is 4-hydroxy-3-methylbut-2-enyl diphosphate reductase.